We begin with the raw amino-acid sequence, 439 residues long: Glutamate-1-semialdehyde 2,1-aminomutase (439 aa).

An N6-(pyridoxal phosphate)lysine modification is found at K273.

Belongs to the class-III pyridoxal-phosphate-dependent aminotransferase family. HemL subfamily. In terms of assembly, homodimer. The cofactor is pyridoxal 5'-phosphate.

It localises to the cytoplasm. It carries out the reaction (S)-4-amino-5-oxopentanoate = 5-aminolevulinate. It participates in porphyrin-containing compound metabolism; protoporphyrin-IX biosynthesis; 5-aminolevulinate from L-glutamyl-tRNA(Glu): step 2/2. The protein is Glutamate-1-semialdehyde 2,1-aminomutase of Paenarthrobacter aurescens (strain TC1).